A 194-amino-acid chain; its full sequence is Oligoribonuclease (194 aa).

Residues 11–174 enclose the Exonuclease domain; it reads LIWIDLEMTG…SDVRDSIDEL (164 aa). Tyrosine 132 is a catalytic residue.

It belongs to the oligoribonuclease family.

It localises to the cytoplasm. Its function is as follows. 3'-to-5' exoribonuclease specific for small oligoribonucleotides. This chain is Oligoribonuclease, found in Xanthomonas axonopodis pv. citri (strain 306).